The chain runs to 336 residues: Heme A synthase (336 aa).

The next 5 helical transmembrane spans lie at 5–25, 92–112, 117–137, 153–173, and 191–211; these read LTRW…VGGI, GRAT…KGII, ILSY…GWYM, LAFH…KLVK, and LIFS…GALV. Position 255 (His255) interacts with heme. Helical transmembrane passes span 257–277, 284–304, and 307–327; these read LGAY…LKVK, VAFY…ITLL, and VPII…SVVI. Position 315 (His315) interacts with heme.

Belongs to the COX15/CtaA family. Type 2 subfamily. As to quaternary structure, interacts with CtaB. Heme b is required as a cofactor.

The protein localises to the cell membrane. It carries out the reaction Fe(II)-heme o + 2 A + H2O = Fe(II)-heme a + 2 AH2. The protein operates within porphyrin-containing compound metabolism; heme A biosynthesis; heme A from heme O: step 1/1. Its function is as follows. Catalyzes the conversion of heme O to heme A by two successive hydroxylations of the methyl group at C8. The first hydroxylation forms heme I, the second hydroxylation results in an unstable dihydroxymethyl group, which spontaneously dehydrates, resulting in the formyl group of heme A. This chain is Heme A synthase, found in Rickettsia bellii (strain OSU 85-389).